Consider the following 193-residue polypeptide: Peptidyl-tRNA hydrolase (193 aa).

Residue Y14 coordinates tRNA. The Proton acceptor role is filled by H19. 3 residues coordinate tRNA: F64, N66, and N112.

The protein belongs to the PTH family. Monomer.

The protein localises to the cytoplasm. It carries out the reaction an N-acyl-L-alpha-aminoacyl-tRNA + H2O = an N-acyl-L-amino acid + a tRNA + H(+). Its function is as follows. Hydrolyzes ribosome-free peptidyl-tRNAs (with 1 or more amino acids incorporated), which drop off the ribosome during protein synthesis, or as a result of ribosome stalling. In terms of biological role, catalyzes the release of premature peptidyl moieties from peptidyl-tRNA molecules trapped in stalled 50S ribosomal subunits, and thus maintains levels of free tRNAs and 50S ribosomes. The protein is Peptidyl-tRNA hydrolase of Bartonella henselae (strain ATCC 49882 / DSM 28221 / CCUG 30454 / Houston 1) (Rochalimaea henselae).